The sequence spans 493 residues: Lysine--tRNA ligase (493 aa).

Positions 406 and 413 each coordinate Mg(2+).

This sequence belongs to the class-II aminoacyl-tRNA synthetase family. In terms of assembly, homodimer. The cofactor is Mg(2+).

It is found in the cytoplasm. The enzyme catalyses tRNA(Lys) + L-lysine + ATP = L-lysyl-tRNA(Lys) + AMP + diphosphate. This is Lysine--tRNA ligase from Leuconostoc citreum (strain KM20).